A 236-amino-acid polypeptide reads, in one-letter code: UPF0502 protein Bpro_3844 (236 aa).

It belongs to the UPF0502 family.

The protein is UPF0502 protein Bpro_3844 of Polaromonas sp. (strain JS666 / ATCC BAA-500).